Reading from the N-terminus, the 33-residue chain is MLISLGWAALAATFTFSIAMVVWGRNGDGSINF.

Residues 2–22 (LISLGWAALAATFTFSIAMVV) form a helical membrane-spanning segment.

The protein belongs to the PetN family. The 4 large subunits of the cytochrome b6-f complex are cytochrome b6, subunit IV (17 kDa polypeptide, PetD), cytochrome f and the Rieske protein, while the 4 small subunits are PetG, PetL, PetM and PetN. The complex functions as a dimer.

The protein resides in the cellular thylakoid membrane. In terms of biological role, component of the cytochrome b6-f complex, which mediates electron transfer between photosystem II (PSII) and photosystem I (PSI), cyclic electron flow around PSI, and state transitions. The sequence is that of Cytochrome b6-f complex subunit 8 from Synechococcus sp. (strain RCC307).